A 123-amino-acid polypeptide reads, in one-letter code: Putative iron-sulfur cluster insertion protein ErpA (123 aa).

Residues cysteine 51, cysteine 115, and cysteine 117 each coordinate iron-sulfur cluster.

Belongs to the HesB/IscA family. As to quaternary structure, homodimer. The cofactor is iron-sulfur cluster.

Its function is as follows. Required for insertion of 4Fe-4S clusters. The chain is Putative iron-sulfur cluster insertion protein ErpA from Bordetella avium (strain 197N).